A 258-amino-acid chain; its full sequence is Undecaprenyl-diphosphatase (258 aa).

The next 8 membrane-spanning stretches (helical) occupy residues 1–21 (MDFL…FLPV), 42–62 (LKCF…FMFF), 69–89 (FNLW…GFLA), 96–116 (FFEP…FIVV), 135–155 (VSFK…IPGT), 173–193 (EVAA…ATAY), 211–231 (IFLV…KLFL), and 237–257 (FSYI…LIYI).

It belongs to the UppP family.

Its subcellular location is the cell inner membrane. It carries out the reaction di-trans,octa-cis-undecaprenyl diphosphate + H2O = di-trans,octa-cis-undecaprenyl phosphate + phosphate + H(+). Catalyzes the dephosphorylation of undecaprenyl diphosphate (UPP). Confers resistance to bacitracin. In Campylobacter fetus subsp. fetus (strain 82-40), this protein is Undecaprenyl-diphosphatase.